The primary structure comprises 502 residues: ATP synthase subunit alpha 1/3 (502 aa).

Position 169–176 (169–176 (GDRQTGKT)) interacts with ATP.

This sequence belongs to the ATPase alpha/beta chains family. As to quaternary structure, F-type ATPases have 2 components, CF(1) - the catalytic core - and CF(0) - the membrane proton channel. CF(1) has five subunits: alpha(3), beta(3), gamma(1), delta(1), epsilon(1). CF(0) has three main subunits: a(1), b(2) and c(9-12). The alpha and beta chains form an alternating ring which encloses part of the gamma chain. CF(1) is attached to CF(0) by a central stalk formed by the gamma and epsilon chains, while a peripheral stalk is formed by the delta and b chains.

It localises to the cell inner membrane. The enzyme catalyses ATP + H2O + 4 H(+)(in) = ADP + phosphate + 5 H(+)(out). In terms of biological role, produces ATP from ADP in the presence of a proton gradient across the membrane. The alpha chain is a regulatory subunit. The chain is ATP synthase subunit alpha 1/3 from Syntrophotalea carbinolica (strain DSM 2380 / NBRC 103641 / GraBd1) (Pelobacter carbinolicus).